The primary structure comprises 352 residues: 3'(2'),5'-bisphosphate nucleotidase (352 aa).

Asp45 (proton acceptor) is an active-site residue. Residues Glu68, Asp133, Ile135, and Asp136 each coordinate Mg(2+). Thr138 functions as the Proton acceptor in the catalytic mechanism. Residues Thr138, His240, Ser264, Lys267, Arg281, and Asp294 each contribute to the adenosine 3',5'-bisphosphate site. AMP contacts are provided by His240, Ser264, Lys267, Arg281, and Asp294. Asp294 contacts Mg(2+).

It belongs to the inositol monophosphatase superfamily. The cofactor is Mg(2+).

It catalyses the reaction 3'-phosphoadenylyl sulfate + H2O = adenosine 5'-phosphosulfate + phosphate. The catalysed reaction is adenosine 3',5'-bisphosphate + H2O = AMP + phosphate. It carries out the reaction adenosine 2',5'-bisphosphate + H2O = AMP + phosphate. Phosphatase that converts adenosine 3'-phosphate 5'-phosphosulfate (PAPS) to adenosine 5'-phosphosulfate (APS) and 3'(2')-phosphoadenosine 5'-phosphate (PAP) to AMP. May regulate the flux of sulfur in the sulfur-activation pathway by converting PAPS to APS. Involved in osmoadaptation. The chain is 3'(2'),5'-bisphosphate nucleotidase from Emericella nidulans (strain FGSC A4 / ATCC 38163 / CBS 112.46 / NRRL 194 / M139) (Aspergillus nidulans).